Consider the following 425-residue polypeptide: Adenylosuccinate synthetase (425 aa).

GTP-binding positions include 12-18 (GDEGKGK) and 40-42 (GHT). Aspartate 13 acts as the Proton acceptor in catalysis. The Mg(2+) site is built by aspartate 13 and glycine 40. IMP contacts are provided by residues 13–16 (DEGK), 38–41 (NAGH), threonine 127, arginine 141, glutamine 222, threonine 237, and arginine 301. Histidine 41 serves as the catalytic Proton donor. Residue 297–303 (AVTGRPR) participates in substrate binding. GTP is bound by residues arginine 303, 329–331 (KID), and 411–413 (SVG).

The protein belongs to the adenylosuccinate synthetase family. In terms of assembly, homodimer. It depends on Mg(2+) as a cofactor.

The protein localises to the cytoplasm. The catalysed reaction is IMP + L-aspartate + GTP = N(6)-(1,2-dicarboxyethyl)-AMP + GDP + phosphate + 2 H(+). It functions in the pathway purine metabolism; AMP biosynthesis via de novo pathway; AMP from IMP: step 1/2. Functionally, plays an important role in the de novo pathway of purine nucleotide biosynthesis. Catalyzes the first committed step in the biosynthesis of AMP from IMP. The sequence is that of Adenylosuccinate synthetase from Fusobacterium nucleatum subsp. nucleatum (strain ATCC 25586 / DSM 15643 / BCRC 10681 / CIP 101130 / JCM 8532 / KCTC 2640 / LMG 13131 / VPI 4355).